The sequence spans 319 residues: Heavy metal-associated isoprenylated plant protein 9 (319 aa).

2 stretches are compositionally biased toward basic and acidic residues: residues 1 to 11 (MGEEVKPEAKE) and 24 to 45 (EEKKKDVAEEKKVAAEEEKPKE). Residues 1–57 (MGEEVKPEAKEAASAPQAVPAEEEEKKKDVAEEKKVAAEEEKPKEEEEPQPPPPPPP) are disordered. The stretch at 21 to 48 (AEEEEKKKDVAEEKKVAAEEEKPKEEEE) forms a coiled coil. HMA domains are found at residues 55-118 (PPPF…KRMA) and 144-208 (LTTV…KQAR). Positions 66, 69, 155, and 158 each coordinate a metal cation. Positions 207-282 (ARIVPQPDPE…RDNEMTAMAQ (76 aa)) are disordered. Over residues 224–254 (QEEKKEESGEGNEKPPETGEEKEEEKKKEGE) the composition is skewed to basic and acidic residues. The segment covering 255–268 (ENGEEGGGEEAAAT) has biased composition (acidic residues). A Cysteine methyl ester modification is found at Cys-316. Cys-316 carries S-farnesyl cysteine lipidation. A propeptide spans 317–319 (CIS) (removed in mature form).

Belongs to the HIPP family.

Heavy-metal-binding protein. The chain is Heavy metal-associated isoprenylated plant protein 9 from Arabidopsis thaliana (Mouse-ear cress).